Here is a 534-residue protein sequence, read N- to C-terminus: Acetyltransferase MATC1 (534 aa).

Catalysis depends on proton acceptor residues H186 and D459.

It belongs to the plant acyltransferase family.

Its subcellular location is the cell membrane. The protein operates within secondary metabolite biosynthesis. Acetyltransferase; part of the gene cluster that mediates the biosynthesis of mannosylerythritol lipids (MELs), surface-active substances that enhance the availability of water-insoluble substrates. Mannosylerythritol lipid production is responsible for hemolytic activity of Ustilago maydis. Depending on the number of acetyl groups, mannosylerythritol lipids can be differentiated into MEL A (fully acetylated), MEL B and MEL C (monoacetylated at R-6 and R-4, respectively), and the fully deacetylated MEL D. The first step in the pathway is the generation of mannosylerythritol by the glycosyltransferase EMT1 which catalyzes the transfer of GDP-mannose to the C-4 atom of meso-erythritol. This reaction has to be stereospecific, since only mannosyl-D-erythritol is generated. The produced disaccharide is subsequently acylated with fatty acids of various lengths derived from the peroxisomal beta-oxidation by the peroxisomal acyltransferases MAC1 and MAC2 at positions C-2 and C-3, repectively. The existence of MEL derivatives which carry an acetyl group at C-2 implies that at least MAC1 also accepts acetyl-CoA as a donor. The final step of MEL biosynthesis is the acetylation of the fully acylated mannosylerythritol lipids catalyzed by the acetyl-CoA-dependent acetyltransferase MAT1. MAT1 displays a relaxed regioselectivity and is able to transfer acetylgroups to both positions C-4 and C-6 of the mannosyl moiety. This chain is Acetyltransferase MATC1, found in Mycosarcoma maydis (Corn smut fungus).